Reading from the N-terminus, the 213-residue chain is Heat shock protein 30C (213 aa).

Positions 61–80 are enriched in basic and acidic residues; that stretch reads SKDTEMRRITDQNRQSRESE. Disordered regions lie at residues 61 to 93 and 174 to 213; these read SKDT…GKDH and ALPP…QKVD. Positions 76 to 188 constitute a sHSP domain; it reads SRESEGTSPN…PETPIPISMD (113 aa).

It belongs to the small heat shock protein (HSP20) family.

This Xenopus laevis (African clawed frog) protein is Heat shock protein 30C (hsp30c).